Here is a 312-residue protein sequence, read N- to C-terminus: Olfactory receptor 51B2 (312 aa).

Residues 1–23 (MWPNITAAPFLLTGFPGLEAAHH) lie on the Extracellular side of the membrane. Residue Asn4 is glycosylated (N-linked (GlcNAc...) asparagine). The helical transmembrane segment at 24–44 (WISIPFFAVYVCILLGNGMLL) threads the bilayer. Over 45–52 (YLIKHDHS) the chain is Cytoplasmic. A helical transmembrane segment spans residues 53–73 (LHEPMYYFLTMLAGTDLMVTL). Topologically, residues 74-97 (TTMPTVMGILWVNHREISSVGCFL) are extracellular. Cys95 and Cys187 are joined by a disulfide. Residues 98–118 (QAYFIHSLSVVESGSLLAMAY) form a helical membrane-spanning segment. Over 119-137 (DCFIAIRNPLRYASILTNT) the chain is Cytoplasmic. The chain crosses the membrane as a helical span at residues 138 to 158 (RVIALGVGVFLRGFVSILPVI). The Extracellular portion of the chain corresponds to 159-194 (LRLFSFSYCKSHVITRAFCLHQEIMRLACADITFNR). The chain crosses the membrane as a helical span at residues 195–215 (LYPVILISLTIFLDCLIILFS). Over 216–235 (YILILNTVIGIASGEERAKA) the chain is Cytoplasmic. The chain crosses the membrane as a helical span at residues 236 to 256 (LNTCISHISCVLIFYVTVMGL). Residues 257–271 (TFIYRFGKNVPEVVH) are Extracellular-facing. The helical transmembrane segment at 272–292 (IIMSYIYFLFPPLMNPVIYSI) threads the bilayer. Over 293 to 312 (KTKQIQYGIIRLLSKHRFSS) the chain is Cytoplasmic.

Belongs to the G-protein coupled receptor 1 family. Post-translationally, ubiquitinated by the CRL2(FEM1A) and CRL2(FEM1C) complexes, which recognize the -Lys-Xaa-Xaa-Arg C-degron at the C-terminus, leading to its degradation.

Its subcellular location is the cell membrane. Functionally, odorant receptor. The polypeptide is Olfactory receptor 51B2 (OR51B2) (Homo sapiens (Human)).